A 407-amino-acid chain; its full sequence is Argininosuccinate synthase (407 aa).

10–18 (AYSGGLDTS) serves as a coordination point for ATP. Positions 88 and 93 each coordinate L-citrulline. Gly118 contributes to the ATP binding site. 3 residues coordinate L-aspartate: Thr120, Asn124, and Asp125. An L-citrulline-binding site is contributed by Asn124. L-citrulline-binding residues include Arg128, Ser177, Ser186, Glu263, and Tyr275.

Belongs to the argininosuccinate synthase family. Type 1 subfamily. In terms of assembly, homotetramer.

The protein localises to the cytoplasm. It catalyses the reaction L-citrulline + L-aspartate + ATP = 2-(N(omega)-L-arginino)succinate + AMP + diphosphate + H(+). It functions in the pathway amino-acid biosynthesis; L-arginine biosynthesis; L-arginine from L-ornithine and carbamoyl phosphate: step 2/3. This chain is Argininosuccinate synthase, found in Clostridium botulinum (strain Alaska E43 / Type E3).